The primary structure comprises 541 residues: Zinc finger CCHC domain-containing protein 7 (541 aa).

The disordered stretch occupies residues 111–144 (AEEKTQSPATSHSNKVAQKCKRNNKKPKPEERPG). Polar residues predominate over residues 116–126 (QSPATSHSNKV). Residues lysine 129, lysine 136, lysine 138, lysine 234, and lysine 249 each participate in a glycyl lysine isopeptide (Lys-Gly) (interchain with G-Cter in SUMO2) cross-link. 3 CCHC-type zinc fingers span residues 236-253 (VTCR…NCPL), 258-275 (RACC…GCPA), and 299-316 (KRCD…ACPE). Lysine 334 is covalently cross-linked (Glycyl lysine isopeptide (Lys-Gly) (interchain with G-Cter in SUMO2)). The segment at 343 to 360 (VYCYNCAQKGHYGHECTE) adopts a CCHC-type 4 zinc-finger fold. Residues 394-541 (VKDLKKNGDF…KKKKPKPSGL (148 aa)) are disordered. Glycyl lysine isopeptide (Lys-Gly) (interchain with G-Cter in SUMO2) cross-links involve residues lysine 408 and lysine 431. Over residues 418 to 434 (RRHHDMRKSRSPRKYRR) the composition is skewed to basic residues. Over residues 435–452 (WPRENKETQKEKTRSREG) the composition is skewed to basic and acidic residues. Residue lysine 473 forms a Glycyl lysine isopeptide (Lys-Gly) (interchain with G-Cter in SUMO2) linkage. Polar residues predominate over residues 474-486 (PNASGCANNQKPS). Residue serine 477 is modified to Phosphoserine. Residues lysine 484 and lysine 487 each participate in a glycyl lysine isopeptide (Lys-Gly) (interchain with G-Cter in SUMO2) cross-link. Positions 487 to 497 (KSLHHASHYHR) are enriched in basic residues. Basic and acidic residues-rich tracts occupy residues 498 to 509 (LREERLLRESKR) and 517 to 527 (STEDGSHDDLF). Lysine 530 participates in a covalent cross-link: Glycyl lysine isopeptide (Lys-Gly) (interchain with G-Cter in SUMO2). Basic residues predominate over residues 530–541 (KQKKKKPKPSGL).

As to quaternary structure, component of a nucleolar TRAMP-like complex, an ATP-dependent exosome regulatory complex consisting of a helicase (MTREX), an oligadenylate polymerase (TENT4B or TENT4A), and a substrate specific RNA-binding factor (ZCCHC7 or ZCCHC8). Several TRAMP-like complexes exist with specific compositions and are associated with nuclear, or nucleolar RNA exosomes.

The protein localises to the nucleus. It is found in the nucleolus. The chain is Zinc finger CCHC domain-containing protein 7 (Zcchc7) from Mus musculus (Mouse).